Reading from the N-terminus, the 467-residue chain is NADH-quinone oxidoreductase subunit H (467 aa).

A run of 9 helical transmembrane segments spans residues 18-38, 88-108, 131-151, 172-192, 206-226, 256-276, 296-316, 328-348, and 363-383; these read WWLVVIKAVFCFAFLMVTVLF, AVYVLAPIVAAIPAFMAIAVI, LPIAMLFILAVASVGIYGIVL, MISYEIAMGAAFASVFLYSGS, WYIVLLPVSFILYIVTMVGET, FMLAEYVNMVTVSAVATTLFL, WWPLLWFVVKVQLLLFFFIWL, LMKLGWKVLIPVSLVWLMLVA, and IALYIGGGVLVLLLLSFLVDM. The interval 389–467 is disordered; sequence GKAADQPAET…PTDGKEASDG (79 aa). The span at 418–430 shows a compositional bias: pro residues; that stretch reads PVPPMPGQQVPPV.

The protein belongs to the complex I subunit 1 family. NDH-1 is composed of 14 different subunits. Subunits NuoA, H, J, K, L, M, N constitute the membrane sector of the complex.

Its subcellular location is the cell membrane. It carries out the reaction a quinone + NADH + 5 H(+)(in) = a quinol + NAD(+) + 4 H(+)(out). NDH-1 shuttles electrons from NADH, via FMN and iron-sulfur (Fe-S) centers, to quinones in the respiratory chain. The immediate electron acceptor for the enzyme in this species is believed to be ubiquinone. Couples the redox reaction to proton translocation (for every two electrons transferred, four hydrogen ions are translocated across the cytoplasmic membrane), and thus conserves the redox energy in a proton gradient. This subunit may bind ubiquinone. This chain is NADH-quinone oxidoreductase subunit H, found in Streptomyces coelicolor (strain ATCC BAA-471 / A3(2) / M145).